Consider the following 122-residue polypeptide: MSKKRSSPNRNVQIADQIQRDLSELIMREVKDPRIGIVTIQSVELTPDYAHAKVYFTALTGTPADTQEALNHAAGHLHNLLFKRLHIHTVPTLHFHYDQTIEKAVAMSRLIDEANATRAKDD.

It belongs to the RbfA family. In terms of assembly, monomer. Binds 30S ribosomal subunits, but not 50S ribosomal subunits or 70S ribosomes.

It localises to the cytoplasm. One of several proteins that assist in the late maturation steps of the functional core of the 30S ribosomal subunit. Associates with free 30S ribosomal subunits (but not with 30S subunits that are part of 70S ribosomes or polysomes). Required for efficient processing of 16S rRNA. May interact with the 5'-terminal helix region of 16S rRNA. This chain is Ribosome-binding factor A, found in Burkholderia mallei (strain NCTC 10229).